Consider the following 78-residue polypeptide: Large ribosomal subunit protein bL28 (78 aa).

Positions 1 to 24 (MSQVCQVTGKRPVTGNNVSHSQRK) are disordered.

This sequence belongs to the bacterial ribosomal protein bL28 family.

This is Large ribosomal subunit protein bL28 from Chromohalobacter salexigens (strain ATCC BAA-138 / DSM 3043 / CIP 106854 / NCIMB 13768 / 1H11).